We begin with the raw amino-acid sequence, 58 residues long: Small ribosomal subunit protein bS21 (58 aa).

Belongs to the bacterial ribosomal protein bS21 family.

In Picosynechococcus sp. (strain ATCC 27264 / PCC 7002 / PR-6) (Agmenellum quadruplicatum), this protein is Small ribosomal subunit protein bS21.